The chain runs to 296 residues: Non-homologous end joining protein Ku (296 aa).

The Ku domain occupies 11-187 (TFGLVNIPVK…ELPEAGEPSS (177 aa)). Positions 254 to 296 (AAARRRGDEHEAPARGERRHAAAAAARTTGRPRAARASRKKRG) are disordered. Basic and acidic residues predominate over residues 258-273 (RRGDEHEAPARGERRH). Positions 275–285 (AAAAARTTGRP) are enriched in low complexity. A compositionally biased stretch (basic residues) spans 286 to 296 (RAARASRKKRG).

The protein belongs to the prokaryotic Ku family. As to quaternary structure, homodimer. Interacts with LigD.

With LigD forms a non-homologous end joining (NHEJ) DNA repair enzyme, which repairs dsDNA breaks with reduced fidelity. Binds linear dsDNA with 5'- and 3'- overhangs but not closed circular dsDNA nor ssDNA. Recruits and stimulates the ligase activity of LigD. The protein is Non-homologous end joining protein Ku of Anaeromyxobacter sp. (strain K).